The sequence spans 444 residues: Chitinase-like protein Idgf5 (444 aa).

A signal peptide spans 1–26 (MMWIQKNPFLGLLLCSFLAFFQSTYA). A GH18 domain is found at 29–444 (GKLVCFYDAQ…PILRSIKFKL (416 aa)). An intrachain disulfide couples cysteine 33 to cysteine 60. 2 N-linked (GlcNAc...) asparagine glycosylation sites follow: asparagine 289 and asparagine 311. A disulfide bridge links cysteine 349 with cysteine 429.

This sequence belongs to the glycosyl hydrolase 18 family. IDGF subfamily. Glycosylated.

It localises to the secreted. Its function is as follows. Probably required to stimulate the proliferation, polarization and motility of imaginal disk cells. May act by stabilizing the binding of insulin-like peptides to its receptor through a simultaneous interaction with both molecules to form a multiprotein signaling complex. In Drosophila melanogaster (Fruit fly), this protein is Chitinase-like protein Idgf5 (Idgf5).